A 156-amino-acid chain; its full sequence is Ribosomal RNA large subunit methyltransferase H (156 aa).

Residues L73, G104, and L123 to L128 contribute to the S-adenosyl-L-methionine site.

Belongs to the RNA methyltransferase RlmH family. As to quaternary structure, homodimer.

Its subcellular location is the cytoplasm. It catalyses the reaction pseudouridine(1915) in 23S rRNA + S-adenosyl-L-methionine = N(3)-methylpseudouridine(1915) in 23S rRNA + S-adenosyl-L-homocysteine + H(+). Specifically methylates the pseudouridine at position 1915 (m3Psi1915) in 23S rRNA. This chain is Ribosomal RNA large subunit methyltransferase H, found in Hahella chejuensis (strain KCTC 2396).